The primary structure comprises 293 residues: Proline iminopeptidase (293 aa).

Catalysis depends on Ser105, which acts as the Nucleophile. The active site involves Asp244. His271 serves as the catalytic Proton donor.

This sequence belongs to the peptidase S33 family. In terms of assembly, part of the tricorn proteolytic complex.

The catalysed reaction is Release of N-terminal proline from a peptide.. Cleaves H-Pro-AMC as well as a wide spectrum of amino acid substrates and several peptide substrates without a proline at the N-terminus. Proteases F1, F2 and F3 degrade oligopeptides produced by Tricorn (themselves probably produced by the proteasome) yielding free amino acids. In Thermoplasma acidophilum (strain ATCC 25905 / DSM 1728 / JCM 9062 / NBRC 15155 / AMRC-C165), this protein is Proline iminopeptidase (pip).